Consider the following 214-residue polypeptide: Membrane-spanning 4-domains subfamily A member 3 (214 aa).

Residues 1 to 31 (MASHEVDNAELGSASAHGTPGSEAGPEELNT) are disordered. Topologically, residues 1 to 49 (MASHEVDNAELGSASAHGTPGSEAGPEELNTSVYQPIDGSPDYQKAKLQ) are cytoplasmic. A helical membrane pass occupies residues 50–70 (VLGAIQILNAAMILALGVFLG). The Extracellular portion of the chain corresponds to 71 to 81 (SLQYPYHFQKH). A helical membrane pass occupies residues 82–102 (FFFFTFYTGYPIWGAVFFCSS). Topologically, residues 103-124 (GTLSVVAGIKPTRTWIQNSFGM) are cytoplasmic. The helical transmembrane segment at 125-145 (NIASATIALVGTAFLSLNIAV) threads the bilayer. Residues 146-175 (NIQSLRSCHSSSESPDLCNYMGSISNGMVS) are Extracellular-facing. Residues 176–196 (LLLILTLLELCVTISTIAMWC) traverse the membrane as a helical segment. Topologically, residues 197-214 (NANCCNSREEISSPPNSV) are cytoplasmic.

It belongs to the MS4A family. In terms of assembly, interacts with CDKN3. Interacts with CDKN3-CDK2 complexes through its binding to CDKN3; this interaction facilitates dissociation of cyclin A from CDKN3-CDK2 complexes. As to expression, expressed specifically in hematopoietic cells and tissues.

The protein localises to the endomembrane system. It localises to the cytoplasm. The protein resides in the perinuclear region. Hematopoietic modulator for the G1-S cell cycle transition. Modulates the level of phosphorylation of cyclin-dependent kinase 2 (CDK2) through its direct binding to cyclin-dependent kinase inhibitor 3 (CDKN3/KAP). The chain is Membrane-spanning 4-domains subfamily A member 3 (MS4A3) from Homo sapiens (Human).